Reading from the N-terminus, the 86-residue chain is Toxin To8 (86 aa).

Residues 1-20 (MTRFVLFISCFFLIGMVVEC) form the signal peptide. Residues 21–83 (KEGYLLGSRG…LWESDTNECG (63 aa)) enclose the LCN-type CS-alpha/beta domain. 4 disulfides stabilise this stretch: Cys-31/Cys-82, Cys-35/Cys-57, Cys-43/Cys-63, and Cys-47/Cys-65. Position 82 is a cysteine amide (Cys-82).

The protein belongs to the long (4 C-C) scorpion toxin superfamily. Sodium channel inhibitor family. Beta subfamily. In terms of tissue distribution, expressed by the venom gland.

The protein resides in the secreted. In terms of biological role, beta toxins bind voltage-independently at site-4 of sodium channels (Nav) and shift the voltage of activation toward more negative potentials thereby affecting sodium channel activation and promoting spontaneous and repetitive firing. The sequence is that of Toxin To8 from Tityus obscurus (Amazonian scorpion).